A 226-amino-acid polypeptide reads, in one-letter code: Urease accessory protein UreF (226 aa).

The protein belongs to the UreF family. In terms of assembly, ureD, UreF and UreG form a complex that acts as a GTP-hydrolysis-dependent molecular chaperone, activating the urease apoprotein by helping to assemble the nickel containing metallocenter of UreC. The UreE protein probably delivers the nickel.

The protein localises to the cytoplasm. In terms of biological role, required for maturation of urease via the functional incorporation of the urease nickel metallocenter. The protein is Urease accessory protein UreF of Burkholderia ambifaria (strain ATCC BAA-244 / DSM 16087 / CCUG 44356 / LMG 19182 / AMMD) (Burkholderia cepacia (strain AMMD)).